Reading from the N-terminus, the 119-residue chain is Iron-sulfur cluster insertion protein ErpA (119 aa).

Residues Cys47, Cys111, and Cys113 each contribute to the iron-sulfur cluster site.

This sequence belongs to the HesB/IscA family. In terms of assembly, homodimer. The cofactor is iron-sulfur cluster.

Its function is as follows. Required for insertion of 4Fe-4S clusters for at least IspG. The polypeptide is Iron-sulfur cluster insertion protein ErpA (Alcanivorax borkumensis (strain ATCC 700651 / DSM 11573 / NCIMB 13689 / SK2)).